The following is a 530-amino-acid chain: ATP synthase subunit alpha (530 aa).

172-179 serves as a coordination point for ATP; that stretch reads GDRQTGKT.

The protein belongs to the ATPase alpha/beta chains family. F-type ATPases have 2 components, CF(1) - the catalytic core - and CF(0) - the membrane proton channel. CF(1) has five subunits: alpha(3), beta(3), gamma(1), delta(1), epsilon(1). CF(0) has three main subunits: a(1), b(2) and c(9-12). The alpha and beta chains form an alternating ring which encloses part of the gamma chain. CF(1) is attached to CF(0) by a central stalk formed by the gamma and epsilon chains, while a peripheral stalk is formed by the delta and b chains.

It localises to the cell inner membrane. The catalysed reaction is ATP + H2O + 4 H(+)(in) = ADP + phosphate + 5 H(+)(out). In terms of biological role, produces ATP from ADP in the presence of a proton gradient across the membrane. The alpha chain is a regulatory subunit. The sequence is that of ATP synthase subunit alpha from Phocaeicola vulgatus (strain ATCC 8482 / DSM 1447 / JCM 5826 / CCUG 4940 / NBRC 14291 / NCTC 11154) (Bacteroides vulgatus).